The sequence spans 756 residues: ATP-dependent DNA helicase Hel308 (756 aa).

ATP-binding positions include Q29 and 47–54 (SATASGKT). The Helicase ATP-binding domain maps to 34–201 (RAGLLNGENI…WLNAKLVKSD (168 aa)). Residues 146–149 (DEIH) carry the DEAH box motif. The 203-residue stretch at 233–435 (SLINLTVDTL…PTSLKFHTLS (203 aa)) folds into the Helicase C-terminal domain.

This sequence belongs to the helicase family. Hel308 subfamily. As to quaternary structure, monomer.

It carries out the reaction Couples ATP hydrolysis with the unwinding of duplex DNA by translocating in the 3'-5' direction.. The catalysed reaction is ATP + H2O = ADP + phosphate + H(+). Its function is as follows. DNA-dependent ATPase and 3'-5' DNA helicase that may be involved in repair of stalled replication forks. This chain is ATP-dependent DNA helicase Hel308, found in Caldivirga maquilingensis (strain ATCC 700844 / DSM 13496 / JCM 10307 / IC-167).